The sequence spans 644 residues: DNA mismatch repair protein MutL (644 aa).

Residues 363-405 (GTFNPFTDDKTNQHYTKAGSGSGSGYSSGSSSSSGSGSGSSYS) are disordered. Low complexity predominate over residues 389-405 (SSGSSSSSGSGSGSSYS).

Belongs to the DNA mismatch repair MutL/HexB family.

Functionally, this protein is involved in the repair of mismatches in DNA. It is required for dam-dependent methyl-directed DNA mismatch repair. May act as a 'molecular matchmaker', a protein that promotes the formation of a stable complex between two or more DNA-binding proteins in an ATP-dependent manner without itself being part of a final effector complex. This is DNA mismatch repair protein MutL from Flavobacterium johnsoniae (strain ATCC 17061 / DSM 2064 / JCM 8514 / BCRC 14874 / CCUG 350202 / NBRC 14942 / NCIMB 11054 / UW101) (Cytophaga johnsonae).